A 545-amino-acid chain; its full sequence is MMGHRPVLVLSQNTKRESGRKVQSGNINAAKTIADIIRTCLGPKSMMKMLLDPMGGIVMTNDGNAILREIQVQHPAAKSMIEISRTQDEEVGGGTTSVIILAGEMLSVAEHFLEQQMHPTVVISAYRKALDDMISTLKKISIPVDINDSDMMLNIINSSITTKAISRWSSLACNIALDAVKTVQFEENGRKEIDIKKYAKVEKIPGGIIEDSCVLRGVMINKDVTHPRMRRYIKNPRIVLLDSSLEYKKGESQTDIEITREEDFTRILQMEEEYIQQLCEDIIQLKPDVVITEKGISDLAQHYLMRANITAIRRVRKTDNNRIARACGARIVSRPEELREDDVGTGAGLLEIKKIGDEYFTFITECKDPKACTILLRGASKEILSEVERNLQDAMQVCRNVLLDPQLVPGGGASEMAVAHALTEKSKAMTGVEQWPYRAVAQALEVIPRTLIQNCGASTIRLLTSLRAKHTQENCETWGVNGETGTLVDVKELGIWEPLAVKLQTYKTAVETAVLLLRIDDIVSGHKKKGDDQSRQGGAPDAGQE.

M1 carries the N-acetylmethionine modification. The tract at residues 1 to 24 (MMGHRPVLVLSQNTKRESGRKVQS) is disordered. S11 bears the Phosphoserine mark. A Glycyl lysine isopeptide (Lys-Gly) (interchain with G-Cter in SUMO2) cross-link involves residue K15. Positions 42, 94, 95, 96, 97, 162, and 163 each coordinate ADP. Residues G42, G94, T95, and T96 each coordinate ATP. Phosphoserine is present on S170. Residue K222 is modified to N6-acetyllysine. S243 and S244 each carry phosphoserine. Y247 carries the post-translational modification Phosphotyrosine. Glycyl lysine isopeptide (Lys-Gly) (interchain with G-Cter in SUMO2) cross-links involve residues K248 and K249. A Phosphoserine modification is found at S252. C366 and C372 are oxidised to a cystine. Residue K381 forms a Glycyl lysine isopeptide (Lys-Gly) (interchain with G-Cter in SUMO2) linkage. Residue G411 coordinates ADP. Residue G411 participates in ATP binding. A phosphothreonine mark is found at T430 and T459. Positions 482, 483, 497, and 502 each coordinate ADP. G482 is a binding site for ATP. ATP is bound at residue E497. The segment at 526–545 (HKKKGDDQSRQGGAPDAGQE) is disordered.

It belongs to the TCP-1 chaperonin family. In terms of assembly, component of the chaperonin-containing T-complex (TRiC), a hexadecamer composed of two identical back-to-back stacked rings enclosing a protein folding chamber. Each ring is made up of eight different subunits: TCP1/CCT1, CCT2, CCT3, CCT4, CCT5, CCT6A/CCT6, CCT7, CCT8. Interacts with PACRG. Interacts with DNAAF4. Interacts with DLEC1.

Its subcellular location is the cytoplasm. It catalyses the reaction ATP + H2O = ADP + phosphate + H(+). In terms of biological role, component of the chaperonin-containing T-complex (TRiC), a molecular chaperone complex that assists the folding of actin, tubulin and other proteins upon ATP hydrolysis. The TRiC complex mediates the folding of WRAP53/TCAB1, thereby regulating telomere maintenance. As part of the TRiC complex may play a role in the assembly of BBSome, a complex involved in ciliogenesis regulating transports vesicles to the cilia. This chain is T-complex protein 1 subunit gamma (CCT3), found in Macaca fascicularis (Crab-eating macaque).